Consider the following 299-residue polypeptide: Acetylglutamate kinase (299 aa).

Substrate contacts are provided by residues 72–73, Arg-94, and Asn-196; that span reads GG.

This sequence belongs to the acetylglutamate kinase family. ArgB subfamily.

It is found in the cytoplasm. The enzyme catalyses N-acetyl-L-glutamate + ATP = N-acetyl-L-glutamyl 5-phosphate + ADP. The protein operates within amino-acid biosynthesis; L-arginine biosynthesis; N(2)-acetyl-L-ornithine from L-glutamate: step 2/4. Functionally, catalyzes the ATP-dependent phosphorylation of N-acetyl-L-glutamate. The protein is Acetylglutamate kinase of Burkholderia ambifaria (strain MC40-6).